Here is a 378-residue protein sequence, read N- to C-terminus: Quinolinate synthase (378 aa).

His-59 and Ser-80 together coordinate iminosuccinate. Cys-125 contacts [4Fe-4S] cluster. Iminosuccinate is bound by residues 151 to 153 and Ser-168; that span reads YAN. Cys-212 lines the [4Fe-4S] cluster pocket. Residues 238-240 and Thr-255 contribute to the iminosuccinate site; that span reads HPE. Position 309 (Cys-309) interacts with [4Fe-4S] cluster.

It belongs to the quinolinate synthase family. Type 1 subfamily. The cofactor is [4Fe-4S] cluster.

Its subcellular location is the cytoplasm. It catalyses the reaction iminosuccinate + dihydroxyacetone phosphate = quinolinate + phosphate + 2 H2O + H(+). It participates in cofactor biosynthesis; NAD(+) biosynthesis; quinolinate from iminoaspartate: step 1/1. Functionally, catalyzes the condensation of iminoaspartate with dihydroxyacetone phosphate to form quinolinate. The polypeptide is Quinolinate synthase (Burkholderia mallei (strain NCTC 10247)).